Consider the following 154-residue polypeptide: Endoribonuclease YbeY (154 aa).

Histidine 114, histidine 118, and histidine 124 together coordinate Zn(2+).

Belongs to the endoribonuclease YbeY family. It depends on Zn(2+) as a cofactor.

It is found in the cytoplasm. Single strand-specific metallo-endoribonuclease involved in late-stage 70S ribosome quality control and in maturation of the 3' terminus of the 16S rRNA. In Anaplasma phagocytophilum (strain HZ), this protein is Endoribonuclease YbeY.